A 185-amino-acid chain; its full sequence is Elongation factor P (185 aa).

This sequence belongs to the elongation factor P family.

The protein localises to the cytoplasm. It functions in the pathway protein biosynthesis; polypeptide chain elongation. Its function is as follows. Involved in peptide bond synthesis. Stimulates efficient translation and peptide-bond synthesis on native or reconstituted 70S ribosomes in vitro. Probably functions indirectly by altering the affinity of the ribosome for aminoacyl-tRNA, thus increasing their reactivity as acceptors for peptidyl transferase. The sequence is that of Elongation factor P from Alkaliphilus metalliredigens (strain QYMF).